We begin with the raw amino-acid sequence, 335 residues long: Transcription factor IIIA (335 aa).

9 C2H2-type zinc fingers span residues 13 to 37, 43 to 67, 73 to 98, 105 to 129, 135 to 159, 162 to 188, 192 to 214, 221 to 246, and 252 to 276; these read YICS…LCKH, FPCT…SMTH, CKCD…QRAH, YECY…QYIH, FKCN…EKVH, YPCQ…AASH, TICD…KRTH, YKCP…LSFH, and FACG…ANTH. Over residues 269-280 the composition is skewed to basic and acidic residues; the sequence is LDRHANTHDPEK. The segment at 269-335 is disordered; it reads LDRHANTHDP…ATAMQNLSIK (67 aa). Residues 281-292 show a composition bias toward basic residues; the sequence is KKMKKPRPKKSL.

The protein resides in the nucleus. Its function is as follows. Involved in ribosomal large subunit biogenesis. Interacts with the internal control region (ICR) of approximately 50 bases within the 5S RNA genes, is required for correct transcription of these genes by RNA polymerase III. Also binds the transcribed 5S RNA's. In Lithobates pipiens (Northern leopard frog), this protein is Transcription factor IIIA (gtf3a).